Reading from the N-terminus, the 293-residue chain is 4-hydroxybenzoate octaprenyltransferase (293 aa).

8 helical membrane passes run 41–61, 98–118, 122–142, 145–165, 167–187, 218–238, 241–261, and 272–292; these read FAAA…LGVI, TEAK…DLLL, TFLL…MKRF, LPQV…YGAV, ESLP…TVAY, IIAL…WISQ, WGYF…CWLT, and AFLN…VGIY.

The protein belongs to the UbiA prenyltransferase family. Mg(2+) serves as cofactor.

It localises to the cell inner membrane. It carries out the reaction all-trans-octaprenyl diphosphate + 4-hydroxybenzoate = 4-hydroxy-3-(all-trans-octaprenyl)benzoate + diphosphate. Its pathway is cofactor biosynthesis; ubiquinone biosynthesis. Functionally, catalyzes the prenylation of para-hydroxybenzoate (PHB) with an all-trans polyprenyl group. Mediates the second step in the final reaction sequence of ubiquinone-8 (UQ-8) biosynthesis, which is the condensation of the polyisoprenoid side chain with PHB, generating the first membrane-bound Q intermediate 3-octaprenyl-4-hydroxybenzoate. The protein is 4-hydroxybenzoate octaprenyltransferase of Actinobacillus pleuropneumoniae serotype 5b (strain L20).